A 406-amino-acid chain; its full sequence is Aminomethyltransferase, mitochondrial (406 aa).

The N-terminal 29 residues, 1 to 29, are a transit peptide targeting the mitochondrion; the sequence is MRGGLWQLGQSITRRLAQADKKTIGRRCF. Substrate contacts are provided by Glu234, Arg265, and Tyr403.

Belongs to the GcvT family. As to quaternary structure, the glycine cleavage system is composed of four proteins: P, T, L and H.

It localises to the mitochondrion. It carries out the reaction N(6)-[(R)-S(8)-aminomethyldihydrolipoyl]-L-lysyl-[protein] + (6S)-5,6,7,8-tetrahydrofolate = N(6)-[(R)-dihydrolipoyl]-L-lysyl-[protein] + (6R)-5,10-methylene-5,6,7,8-tetrahydrofolate + NH4(+). Functionally, the glycine cleavage system catalyzes the degradation of glycine. The sequence is that of Aminomethyltransferase, mitochondrial (GDCST) from Solanum tuberosum (Potato).